Consider the following 891-residue polypeptide: MNKHHPKLRSFYSIRKSTLGVASVIVSTLFLITSQHQAQAAENTNTSDKISENQNNNATTTQQPKDTNQTQPATQPVITAKNYPAADESLKDAIKDPALENKEHDIGPREQVNFQLLDKNNETQYYHFFSIKDPADVYYTKKKAEVELDINTASTWKKFEVYENNQKLPVRLVSYSPVPEDHAYIRFPVSDGTQELKIVSSTQIDDGEETNYDYTKLVFAKPIYNDPSLVKSDTNDAVVTNDQSSSDASNQTNTNTSNQNTSTTNNANNQPQATTNMSQPAQPKSSANADQASSQPAHETNSNGNTNDKTNESSNQSDVNQQYPPADESLQDAIKNPAIIDKEHTADNWRPIDFQMKNDKGERQFYHYASTVEPATVIFTKTGPVIELGLKTASTWKKFEVYEGDKKLPVELVSYDSDKDYAYIRFPVSNGTRDVKIVSSIEYGENIHEDYDYTLMVFAQPITNNPDDYVDEETYNLQKLLAPYHKAKTLERQVYELEKLQEKLPEKYKAEYKKKLDQTRVELADQVKSAVTEFENVTPTNDQLTDLQEAHFVVFESEENSESVMDGFVEHPFYTATLNGQKYVVMKTKDDSYWKDLIVEGKRVTTVSKDPKNNSRTLIFPYIPDKAVYNAIVKVVVANIGYEGQYHVRIINQDINTKDDDTSQNNTSEPLNVQTGQEGKVADTDVAENSSTATNPKDASDKADVIEPESDVVKDADNNIDKDVQHDVDHLSDMSDNNHFDKYDLKEMDTQIAKDTDRNVDNSVGMSSNVDTDKDSNKNKDKVIQLAHIADKNNHTGKAAKLDVVKQNYNNTDKVTDKKTTEHLPSDIHKTVDKTVKTKEKAGTPSKENKLSQSKMLPKTGETTSSQSWWGLYALLGMLALFIPKFRKESK.

The first 40 residues, 1 to 40 (MNKHHPKLRSFYSIRKSTLGVASVIVSTLFLITSQHQAQA), serve as a signal peptide directing secretion. Residues 42–77 (ENTNTSDKISENQNNNATTTQQPKDTNQTQPATQPV) are disordered. Residues 53–63 (NQNNNATTTQQ) show a composition bias toward low complexity. Over residues 64 to 77 (PKDTNQTQPATQPV) the composition is skewed to polar residues. The region spanning 105–232 (DIGPREQVNF…IYNDPSLVKS (128 aa)) is the NEAT 1 domain. The tract at residues 239 to 324 (VTNDQSSSDA…NQSDVNQQYP (86 aa)) is disordered. Positions 240-276 (TNDQSSSDASNQTNTNTSNQNTSTTNNANNQPQATTN) are enriched in low complexity. The segment covering 277–323 (MSQPAQPKSSANADQASSQPAHETNSNGNTNDKTNESSNQSDVNQQY) has biased composition (polar residues). 2 NEAT domains span residues 345-471 (TADN…DYVD) and 543-660 (QLTD…TKDD). 3 disordered regions span residues 657–718 (TKDD…DADN), 752–777 (IAKD…KDSN), and 835–864 (TVKT…GETT). 2 stretches are compositionally biased toward polar residues: residues 663-677 (SQNN…QTGQ) and 687-697 (AENSSTATNPK). Basic and acidic residues predominate over residues 698 to 718 (DASDKADVIEPESDVVKDADN). The span at 835 to 850 (TVKTKEKAGTPSKENK) shows a compositional bias: basic and acidic residues. Over residues 851 to 864 (LSQSKMLPKTGETT) the composition is skewed to polar residues. The LPXTG sorting signal signature appears at 857 to 861 (LPKTG). At threonine 860 the chain carries Pentaglycyl murein peptidoglycan amidated threonine. The propeptide at 861-891 (GETTSSQSWWGLYALLGMLALFIPKFRKESK) is removed by sortase.

Belongs to the IsdH family.

The protein localises to the secreted. Its subcellular location is the cell wall. Functionally, binds human plasma haptoglobin-hemoglobin complexes, haptoglobin and hemoglobin. Binds haptoglobin-hemoglobin complexes with significantly higher affinity than haptoglobin alone. This is Iron-regulated surface determinant protein H (isdH) from Staphylococcus aureus (strain Mu50 / ATCC 700699).